The primary structure comprises 395 residues: Chalcone synthase (395 aa).

The active site involves Cys-169.

Belongs to the thiolase-like superfamily. Chalcone/stilbene synthases family.

The enzyme catalyses (E)-4-coumaroyl-CoA + 3 malonyl-CoA + 3 H(+) = 2',4,4',6'-tetrahydroxychalcone + 3 CO2 + 4 CoA. Its pathway is secondary metabolite biosynthesis; flavonoid biosynthesis. The primary product of this enzyme is 4,2',4',6'-tetrahydroxychalcone (also termed naringenin-chalcone or chalcone) which can under specific conditions spontaneously isomerize into naringenin. The chain is Chalcone synthase (CHS) from Pinus strobus (Eastern white pine).